Here is a 121-residue protein sequence, read N- to C-terminus: Small ribosomal subunit protein bS21m (121 aa).

A mitochondrion-targeting transit peptide spans 1-14 (MNSSYFPGVLGVRW).

The protein belongs to the bacterial ribosomal protein bS21 family. Component of the mitochondrial small ribosomal subunit (mt-SSU). Mature yeast 74S mitochondrial ribosomes consist of a small (37S) and a large (54S) subunit. The 37S small subunit contains a 15S ribosomal RNA (15S mt-rRNA) and at least 32 different proteins. The 54S large subunit contains a 21S rRNA (21S mt-rRNA) and at least 45 different proteins.

It localises to the mitochondrion. Its function is as follows. Component of the mitochondrial ribosome (mitoribosome), a dedicated translation machinery responsible for the synthesis of mitochondrial genome-encoded proteins, including at least some of the essential transmembrane subunits of the mitochondrial respiratory chain. The mitoribosomes are attached to the mitochondrial inner membrane and translation products are cotranslationally integrated into the membrane. This Schizosaccharomyces pombe (strain 972 / ATCC 24843) (Fission yeast) protein is Small ribosomal subunit protein bS21m (mrp21).